The following is a 211-amino-acid chain: Small ribosomal subunit protein uS3 (211 aa).

The KH type-2 domain maps to 38 to 106; the sequence is LRSFVKKTFH…DVELHIVEVK (69 aa).

This sequence belongs to the universal ribosomal protein uS3 family. As to quaternary structure, part of the 30S ribosomal subunit. Forms a tight complex with proteins S10 and S14.

Binds the lower part of the 30S subunit head. Binds mRNA in the 70S ribosome, positioning it for translation. The polypeptide is Small ribosomal subunit protein uS3 (Anaplasma marginale (strain Florida)).